A 209-amino-acid chain; its full sequence is Guanylyl cyclase-activating protein 3 (209 aa).

Residue G2 is the site of N-myristoyl glycine attachment. N3 is subject to Deamidated asparagine. EF-hand domains lie at 15-50 (PTQE…QGLN), 52-87 (KANK…IMQE), 88-123 (KMEQ…VQAL), and 130-165 (SPEE…DQDL). D65, N67, D69, E76, D101, D103, N105, S107, E112, D143, N145, D147, E149, and E154 together coordinate Ca(2+). The segment at 187–209 (QPDMETDSSKSPDKAGLGKVKMK) is disordered.

In terms of tissue distribution, retina.

Stimulates guanylyl cyclase 1 (GC1) and GC2 when free calcium ions concentration is low and inhibits guanylyl cyclases when free calcium ions concentration is elevated. This Ca(2+)-sensitive regulation of guanylyl cyclase (GC) is a key event in recovery of the dark state of rod photoreceptors following light exposure. This Homo sapiens (Human) protein is Guanylyl cyclase-activating protein 3 (GUCA1C).